The chain runs to 275 residues: UDP-Gal:alpha-D-GlcNAc-diphosphoundecaprenol beta-1,3-galactosyltransferase (275 aa).

Belongs to the glycosyltransferase 2 family. Mn(2+) serves as cofactor.

It localises to the cell inner membrane. The catalysed reaction is N-acetyl-alpha-D-glucosaminyl-di-trans,octa-cis-undecaprenyl diphosphate + UDP-alpha-D-galactose = beta-D-Gal-(1-&gt;3)-alpha-D-GlcNAc-di-trans,octa-cis-undecaprenyl diphosphate + UDP + H(+). It participates in bacterial outer membrane biogenesis; LPS O-antigen biosynthesis. Catalyzes the addition of Gal, the second sugar moiety of the O7-antigen repeating unit, to GlcNAc-pyrophosphate-undecaprenol. This is UDP-Gal:alpha-D-GlcNAc-diphosphoundecaprenol beta-1,3-galactosyltransferase (wbbD) from Escherichia coli.